The following is a 498-amino-acid chain: ATP synthase subunit beta, chloroplastic (498 aa).

Residue 172–179 (GGAGVGKT) coordinates ATP.

This sequence belongs to the ATPase alpha/beta chains family. As to quaternary structure, F-type ATPases have 2 components, CF(1) - the catalytic core - and CF(0) - the membrane proton channel. CF(1) has five subunits: alpha(3), beta(3), gamma(1), delta(1), epsilon(1). CF(0) has four main subunits: a(1), b(1), b'(1) and c(9-12).

Its subcellular location is the plastid. It is found in the chloroplast thylakoid membrane. It carries out the reaction ATP + H2O + 4 H(+)(in) = ADP + phosphate + 5 H(+)(out). Functionally, produces ATP from ADP in the presence of a proton gradient across the membrane. The catalytic sites are hosted primarily by the beta subunits. The protein is ATP synthase subunit beta, chloroplastic of Phoenix dactylifera (Date palm).